Here is a 644-residue protein sequence, read N- to C-terminus: Archaeal Lon protease (644 aa).

The span at 1-18 (MKTTIKNSRTQESVSYEG) shows a compositional bias: polar residues. Residues 1-30 (MKTTIKNSRTQESVSYEGNETKKGTGETLS) are disordered. The Cytoplasmic segment spans residues 1–137 (MKTTIKNSRT…KARSQDEKKN (137 aa)). 71–78 (GEPGVGKS) is an ATP binding site. 2 consecutive transmembrane segments (helical) span residues 138-155 (LFMM…FMMN) and 156-171 (QFLA…FLAL). Topologically, residues 172 to 644 (QQFRPRTTVM…PSIMKKPAMH (473 aa)) are cytoplasmic. The region spanning 438–617 (GGEVGRVNGL…GDVLEHALIG (180 aa)) is the Lon proteolytic domain. Residues serine 524 and lysine 567 contribute to the active site.

Belongs to the peptidase S16 family. Archaeal LonB subfamily. In terms of assembly, homohexamer. Organized in a ring with a central cavity.

Its subcellular location is the cell membrane. Functionally, ATP-dependent serine protease that mediates the selective degradation of mutant and abnormal proteins as well as certain short-lived regulatory proteins. Degrades polypeptides processively. In Methanothermobacter thermautotrophicus (strain ATCC 29096 / DSM 1053 / JCM 10044 / NBRC 100330 / Delta H) (Methanobacterium thermoautotrophicum), this protein is Archaeal Lon protease.